The sequence spans 165 residues: Nutritionally-regulated adipose and cardiac-enriched protein (165 aa).

The segment at 1–47 (MRSAARVSRSNSHPRTRHPTRENEGTTWGSQPSRTERDGDRKCPPSI) is disordered. Positions 34 to 43 (RTERDGDRKC) are enriched in basic and acidic residues. The chain crosses the membrane as a helical span at residues 112–132 (GSLFLWLTLCALLGVVLVLYC).

As to expression, predominantly expressed in white adipose tissue (at protein level) and brown adipose tissue. Also detected in heart.

Its subcellular location is the cell membrane. This is Nutritionally-regulated adipose and cardiac-enriched protein (Nrac) from Mus musculus (Mouse).